A 645-amino-acid chain; its full sequence is DNA mismatch repair protein MutL (645 aa).

Residues 371–403 (VHDQKDKNHDVESHKNNLDSTSSTNNESTEVSN) form a disordered region. Residues 372–387 (HDQKDKNHDVESHKNN) show a composition bias toward basic and acidic residues. Low complexity predominate over residues 390-402 (STSSTNNESTEVS).

This sequence belongs to the DNA mismatch repair MutL/HexB family.

Functionally, this protein is involved in the repair of mismatches in DNA. It is required for dam-dependent methyl-directed DNA mismatch repair. May act as a 'molecular matchmaker', a protein that promotes the formation of a stable complex between two or more DNA-binding proteins in an ATP-dependent manner without itself being part of a final effector complex. This Staphylococcus epidermidis (strain ATCC 35984 / DSM 28319 / BCRC 17069 / CCUG 31568 / BM 3577 / RP62A) protein is DNA mismatch repair protein MutL.